Reading from the N-terminus, the 433-residue chain is Glutamate-1-semialdehyde 2,1-aminomutase (433 aa).

Lysine 271 carries the post-translational modification N6-(pyridoxal phosphate)lysine.

This sequence belongs to the class-III pyridoxal-phosphate-dependent aminotransferase family. HemL subfamily. Homodimer. Pyridoxal 5'-phosphate is required as a cofactor.

The protein localises to the cytoplasm. It catalyses the reaction (S)-4-amino-5-oxopentanoate = 5-aminolevulinate. It functions in the pathway porphyrin-containing compound metabolism; protoporphyrin-IX biosynthesis; 5-aminolevulinate from L-glutamyl-tRNA(Glu): step 2/2. It participates in porphyrin-containing compound metabolism; chlorophyll biosynthesis. The polypeptide is Glutamate-1-semialdehyde 2,1-aminomutase (Prochlorococcus marinus (strain AS9601)).